The primary structure comprises 130 residues: Albumin-1 C (130 aa).

The first 26 residues, 1 to 26 (MASVKLASLIVLFATLGMFLTKNVGA), serve as a signal peptide directing secretion. Cystine bridges form between cysteine 29-cysteine 46, cysteine 33-cysteine 48, and cysteine 41-cysteine 58. 2 consecutive propeptides follow at residues 64 to 69 (VFLRTN) and 123 to 130 (LLKSVSTA).

Post-translationally, the C-terminal glycine may be removed from PA1b. In terms of tissue distribution, major component of both the cotyledons and embryonic axes of mature seeds.

In terms of biological role, PA1b binds to basic 7S globulin (BG) and stimulates its phosphorylation activity. Involved in the signal transduction system to regulate the growth and differentiation as a hormone peptide. Toxic to various insects through binding to a high affinity binding site in the insect gut. The sequence is that of Albumin-1 C from Pisum sativum (Garden pea).